The chain runs to 202 residues: Dephospho-CoA kinase (202 aa).

A DPCK domain is found at 5-202 (VIGLTGGIGS…KKYLTLTKMV (198 aa)). Residue 13 to 18 (GSGKTT) coordinates ATP.

This sequence belongs to the CoaE family.

The protein localises to the cytoplasm. It catalyses the reaction 3'-dephospho-CoA + ATP = ADP + CoA + H(+). Its pathway is cofactor biosynthesis; coenzyme A biosynthesis; CoA from (R)-pantothenate: step 5/5. Functionally, catalyzes the phosphorylation of the 3'-hydroxyl group of dephosphocoenzyme A to form coenzyme A. The chain is Dephospho-CoA kinase from Colwellia psychrerythraea (strain 34H / ATCC BAA-681) (Vibrio psychroerythus).